Here is a 486-residue protein sequence, read N- to C-terminus: Cardiolipin synthase A (486 aa).

Transmembrane regions (helical) follow at residues 3 to 23 (TFYT…IAGV) and 38 to 58 (MTWL…YFAF). PLD phosphodiesterase domains are found at residues 219-246 (MDLR…VDPR) and 399-426 (EDGL…DMRS). Residues H224, K226, D231, H404, K406, and D411 contribute to the active site.

This sequence belongs to the phospholipase D family. Cardiolipin synthase subfamily. ClsA sub-subfamily.

Its subcellular location is the cell inner membrane. The enzyme catalyses 2 a 1,2-diacyl-sn-glycero-3-phospho-(1'-sn-glycerol) = a cardiolipin + glycerol. Functionally, catalyzes the reversible phosphatidyl group transfer from one phosphatidylglycerol molecule to another to form cardiolipin (CL) (diphosphatidylglycerol) and glycerol. This Proteus mirabilis (strain HI4320) protein is Cardiolipin synthase A.